The following is a 907-amino-acid chain: Protein translocase subunit SecA (907 aa).

Residues Q87, 105 to 109 (GEGKT), and D510 each bind ATP. Zn(2+) is bound by residues C892, C894, C903, and H904.

This sequence belongs to the SecA family. Monomer and homodimer. Part of the essential Sec protein translocation apparatus which comprises SecA, SecYEG and auxiliary proteins SecDF-YajC and YidC. Requires Zn(2+) as cofactor.

Its subcellular location is the cell inner membrane. The protein localises to the cytoplasm. The catalysed reaction is ATP + H2O + cellular proteinSide 1 = ADP + phosphate + cellular proteinSide 2.. In terms of biological role, part of the Sec protein translocase complex. Interacts with the SecYEG preprotein conducting channel. Has a central role in coupling the hydrolysis of ATP to the transfer of proteins into and across the cell membrane, serving both as a receptor for the preprotein-SecB complex and as an ATP-driven molecular motor driving the stepwise translocation of polypeptide chains across the membrane. The sequence is that of Protein translocase subunit SecA from Acinetobacter baumannii (strain ATCC 17978 / DSM 105126 / CIP 53.77 / LMG 1025 / NCDC KC755 / 5377).